We begin with the raw amino-acid sequence, 215 residues long: 3-demethoxyubiquinol 3-hydroxylase (215 aa).

Fe cation is bound by residues Glu-64, Glu-94, His-97, Glu-146, Glu-178, and His-181.

The protein belongs to the COQ7 family. Requires Fe cation as cofactor.

It is found in the cell membrane. The enzyme catalyses a 5-methoxy-2-methyl-3-(all-trans-polyprenyl)benzene-1,4-diol + AH2 + O2 = a 3-demethylubiquinol + A + H2O. It functions in the pathway cofactor biosynthesis; ubiquinone biosynthesis. Functionally, catalyzes the hydroxylation of 2-nonaprenyl-3-methyl-6-methoxy-1,4-benzoquinol during ubiquinone biosynthesis. The polypeptide is 3-demethoxyubiquinol 3-hydroxylase (Stutzerimonas stutzeri (strain A1501) (Pseudomonas stutzeri)).